Consider the following 879-residue polypeptide: Alanine--tRNA ligase (879 aa).

Residues His565, His569, Cys674, and His678 each coordinate Zn(2+).

This sequence belongs to the class-II aminoacyl-tRNA synthetase family. Zn(2+) is required as a cofactor.

The protein localises to the cytoplasm. It carries out the reaction tRNA(Ala) + L-alanine + ATP = L-alanyl-tRNA(Ala) + AMP + diphosphate. Catalyzes the attachment of alanine to tRNA(Ala) in a two-step reaction: alanine is first activated by ATP to form Ala-AMP and then transferred to the acceptor end of tRNA(Ala). Also edits incorrectly charged Ser-tRNA(Ala) and Gly-tRNA(Ala) via its editing domain. This Gluconobacter oxydans (strain 621H) (Gluconobacter suboxydans) protein is Alanine--tRNA ligase.